Consider the following 301-residue polypeptide: MGFVKVLKTKAYFKRFQTKYRRRREGLTDYYARKRLIIQDKDKYNTPKYRLVARATNTRIIAQIVYATLKCDRVLCAADSYELKRFGVSTGLASYAAAYATGLLLARRLLKQIGLDTVYAGQTKVDGAYFNVDEDQKEKKPFKAILDAGLVRTTTGNRVFGVLKGACDGGINIPHSESRFPGYVRASDEGESSKYKPEDHKARIFGKHIDAYMKHLKGQSNEAFQKQFSKWSKTLEAAKVDSVEKLFTKVHAEIRKNPERVKSTKKNDKPKRDHKKFYPTKLTAAQRKDRVKTKFQLALSQ.

The segment covering 257–271 (NPERVKSTKKNDKPK) has biased composition (basic and acidic residues). The tract at residues 257–283 (NPERVKSTKKNDKPKRDHKKFYPTKLT) is disordered.

It belongs to the universal ribosomal protein uL18 family. In terms of assembly, component of the large ribosomal subunit (LSU).

It localises to the cytoplasm. The protein localises to the nucleus. Component of the ribosome, a large ribonucleoprotein complex responsible for the synthesis of proteins in the cell. The small ribosomal subunit (SSU) binds messenger RNAs (mRNAs) and translates the encoded message by selecting cognate aminoacyl-transfer RNA (tRNA) molecules. The large subunit (LSU) contains the ribosomal catalytic site termed the peptidyl transferase center (PTC), which catalyzes the formation of peptide bonds, thereby polymerizing the amino acids delivered by tRNAs into a polypeptide chain. The nascent polypeptides leave the ribosome through a tunnel in the LSU and interact with protein factors that function in enzymatic processing, targeting, and the membrane insertion of nascent chains at the exit of the ribosomal tunnel. The protein is Large ribosomal subunit protein uL18 (RPL5) of Tetrahymena thermophila (strain SB210).